The primary structure comprises 426 residues: Serine--tRNA ligase (426 aa).

232 to 234 provides a ligand contact to L-serine; it reads TAE. 263–265 contacts ATP; it reads RRE. Glu286 contributes to the L-serine binding site. An ATP-binding site is contributed by 350-353; it reads EISS. Ser385 lines the L-serine pocket.

The protein belongs to the class-II aminoacyl-tRNA synthetase family. Type-1 seryl-tRNA synthetase subfamily. As to quaternary structure, homodimer. The tRNA molecule binds across the dimer.

The protein resides in the cytoplasm. The enzyme catalyses tRNA(Ser) + L-serine + ATP = L-seryl-tRNA(Ser) + AMP + diphosphate + H(+). It carries out the reaction tRNA(Sec) + L-serine + ATP = L-seryl-tRNA(Sec) + AMP + diphosphate + H(+). It participates in aminoacyl-tRNA biosynthesis; selenocysteinyl-tRNA(Sec) biosynthesis; L-seryl-tRNA(Sec) from L-serine and tRNA(Sec): step 1/1. In terms of biological role, catalyzes the attachment of serine to tRNA(Ser). Is also able to aminoacylate tRNA(Sec) with serine, to form the misacylated tRNA L-seryl-tRNA(Sec), which will be further converted into selenocysteinyl-tRNA(Sec). The protein is Serine--tRNA ligase of Fervidobacterium nodosum (strain ATCC 35602 / DSM 5306 / Rt17-B1).